Here is a 453-residue protein sequence, read N- to C-terminus: Trigger factor (453 aa).

Positions 171-256 (GDRVTVSFKG…ATKVEAPQDV (86 aa)) constitute a PPIase FKBP-type domain.

It belongs to the FKBP-type PPIase family. Tig subfamily.

It is found in the cytoplasm. It catalyses the reaction [protein]-peptidylproline (omega=180) = [protein]-peptidylproline (omega=0). Functionally, involved in protein export. Acts as a chaperone by maintaining the newly synthesized protein in an open conformation. Functions as a peptidyl-prolyl cis-trans isomerase. The protein is Trigger factor of Rhodopseudomonas palustris (strain BisB5).